The chain runs to 232 residues: Putative uridine kinase DAS2 (232 aa).

An ATP-binding site is contributed by 17–24 (GGHATGVG).

This sequence belongs to the uridine kinase family.

The protein resides in the cytoplasm. It localises to the nucleus. It carries out the reaction uridine + ATP = UMP + ADP + H(+). It catalyses the reaction cytidine + ATP = CMP + ADP + H(+). It functions in the pathway pyrimidine metabolism; CTP biosynthesis via salvage pathway; CTP from cytidine: step 1/3. Its pathway is pyrimidine metabolism; UMP biosynthesis via salvage pathway; UMP from uridine: step 1/1. Functionally, putative uridine kinase identified in a screen for mutants with increased levels of rDNA transcription. The protein is Putative uridine kinase DAS2 (DAS2) of Saccharomyces cerevisiae (strain ATCC 204508 / S288c) (Baker's yeast).